A 417-amino-acid chain; its full sequence is CinA-like protein (417 aa).

This sequence belongs to the CinA family.

This chain is CinA-like protein, found in Gloeothece citriformis (strain PCC 7424) (Cyanothece sp. (strain PCC 7424)).